The sequence spans 222 residues: Ribosomal RNA small subunit methyltransferase G (222 aa).

S-adenosyl-L-methionine is bound by residues Gly82, Leu87, 132 to 133 (AE), and Arg150.

The protein belongs to the methyltransferase superfamily. RNA methyltransferase RsmG family.

The protein localises to the cytoplasm. Specifically methylates the N7 position of guanine in position 518 of 16S rRNA. This chain is Ribosomal RNA small subunit methyltransferase G, found in Corynebacterium jeikeium (strain K411).